The following is a 540-amino-acid chain: Glucose-6-phosphate isomerase (540 aa).

Residue E350 is the Proton donor of the active site. Catalysis depends on residues H381 and K503.

This sequence belongs to the GPI family.

It is found in the cytoplasm. It carries out the reaction alpha-D-glucose 6-phosphate = beta-D-fructose 6-phosphate. Its pathway is carbohydrate biosynthesis; gluconeogenesis. The protein operates within carbohydrate degradation; glycolysis; D-glyceraldehyde 3-phosphate and glycerone phosphate from D-glucose: step 2/4. Its function is as follows. Catalyzes the reversible isomerization of glucose-6-phosphate to fructose-6-phosphate. In Paraburkholderia phymatum (strain DSM 17167 / CIP 108236 / LMG 21445 / STM815) (Burkholderia phymatum), this protein is Glucose-6-phosphate isomerase.